A 263-amino-acid chain; its full sequence is Lens fiber major intrinsic protein (263 aa).

Residues 1-9 (MWELRSASF) are Cytoplasmic-facing. Residues 10–29 (WRAIFAEFFATLFYVFFGLG) form a helical membrane-spanning segment. Residues 30-41 (SSLRWAPGPLHV) lie on the Extracellular side of the membrane. Residues 42-59 (LQVALAFGLALATLVQTV) traverse the membrane as a helical segment. Topologically, residues 60 to 61 (GH) are cytoplasmic. The discontinuously helical intramembrane region spans 62–77 (ISGAHVNPAVTFAFLV). An NPA 1 motif is present at residues 68–70 (NPA). Residues 78–82 (GSQMS) are Cytoplasmic-facing. A helical transmembrane segment spans residues 83–106 (LLRAFCYIAAQLLGAVAGAAVLYS). Topologically, residues 107-127 (VTPPAVRGNLALNTLHAGVSV) are extracellular. Residues 128–148 (GQATTVEIFLTLQFVLCIFAT) form a helical membrane-spanning segment. The Cytoplasmic portion of the chain corresponds to 149–156 (YDERRNGR). A helical membrane pass occupies residues 157–175 (MGSVALAVGFSLTLGHLFG). Over 176–178 (MYY) the chain is Extracellular. Positions 179 to 193 (TGAGMNPARSFAPAI) form an intramembrane region, discontinuously helical. Positions 184-186 (NPA) match the NPA 2 motif. Over 194–200 (LTRNFSN) the chain is Extracellular. A helical membrane pass occupies residues 201-222 (HWVYWVGPIIGGGLGSLLYDFL). The Cytoplasmic segment spans residues 223-263 (LFPRLKSVSERLSILKGARPSDSNGQPEGTGEPVELKTQAL). The tract at residues 227–237 (LKSVSERLSIL) is interaction with CALM. A phosphoserine mark is found at S235, S243, and S245. Residues 240–263 (ARPSDSNGQPEGTGEPVELKTQAL) are disordered. Residue N246 is modified to Deamidated asparagine.

The protein belongs to the MIP/aquaporin (TC 1.A.8) family. In terms of assembly, homotetramer; each monomer provides an independent water pore. Two homotetramers on opposing membranes can dimerize, forming a cell-cell junction. Interacts with CALM; the calcium-calmodulin/CALM complex interacts with the cytoplasmic domains of two aquaporins, leading to channel closure. Interacts with BFSP1 (via C-terminus); prevents calcium-dependent inhibition of the water channel activity. In terms of processing, subject to partial proteolytic cleavage in the eye lens core. Partial proteolysis promotes interactions between tetramers from adjoining membranes. Fatty acylated at Met-1 and Lys-238. The acyl modifications, in decreasing order of ion abundance, are: oleoyl (C18:1) &gt; palmitoyl (C16:0) &gt; stearoyl (C18:0) &gt; eicosenoyl (C20:1) &gt; dihomo-gamma-linolenoyl (C20:3) &gt; palmitoleoyl (C16:1) &gt; eicosadienoyl (C20:2).

Its subcellular location is the cell membrane. The protein localises to the cell junction. It catalyses the reaction H2O(in) = H2O(out). Its activity is regulated as follows. The water channel activity is inhibited by calcium through calmodulin/CALM. Functionally, aquaporins form homotetrameric transmembrane channels, with each monomer independently mediating water transport across the plasma membrane along its osmotic gradient. Specifically expressed in lens fiber cells, this aquaporin is crucial for maintaining lens water homeostasis and transparency. Beyond water permeability, it also acts as a cell-to-cell adhesion molecule, forming thin junctions between lens fiber cells that are essential for maintaining the ordered structure and transparency of the lens. In Rattus norvegicus (Rat), this protein is Lens fiber major intrinsic protein.